Here is a 129-residue protein sequence, read N- to C-terminus: Probable cytochrome b5 2 (129 aa).

The Cytochrome b5 heme-binding domain maps to 3–79; sequence EKTITVEEVL…LEKFYIGNLL (77 aa). The heme site is built by His38 and His62. A helical membrane pass occupies residues 105–125; sequence VKPAMWLFVLVMVVAYFAFRK.

This sequence belongs to the cytochrome b5 family.

Its subcellular location is the endoplasmic reticulum membrane. It is found in the microsome membrane. The protein resides in the mitochondrion. Its function is as follows. Membrane bound hemoprotein which function as an electron carrier for several membrane bound oxygenases. In Schizosaccharomyces pombe (strain 972 / ATCC 24843) (Fission yeast), this protein is Probable cytochrome b5 2 (oca8).